We begin with the raw amino-acid sequence, 310 residues long: GTP-binding protein GTR1 (310 aa).

GTP is bound by residues Ser-15, Gly-18, Lys-19, Ser-20, Ser-21, Thr-35, Thr-41, Gly-64, His-126, Asp-129, and Ile-166.

Belongs to the GTR/RAG GTP-binding protein family. Heterodimer; with GTR2. Component of the GSE complex composed of GTR1, GTR2, SLM4, MEH1 and LTV1. Interacts with GTR2; the interaction is direct. Interacts with TOR1.

The protein resides in the vacuole membrane. The catalysed reaction is GTP + H2O = GDP + phosphate + H(+). In terms of biological role, GTPase involved in activation of the TORC1 signaling pathway, which promotes growth and represses autophagy in nutrient-rich conditions. Also required for TORC1 inactivation during nitrogen starvation. Required for intracellular sorting of GAP1 out of the endosome. Functionally associated with the inorganic phosphate transporter PHO84, and may be involved in regulating its function or localization. This Saccharomyces cerevisiae (strain ATCC 204508 / S288c) (Baker's yeast) protein is GTP-binding protein GTR1 (GTR1).